Reading from the N-terminus, the 199-residue chain is Probable nicotinate-nucleotide adenylyltransferase (199 aa).

Belongs to the NadD family.

It catalyses the reaction nicotinate beta-D-ribonucleotide + ATP + H(+) = deamido-NAD(+) + diphosphate. It participates in cofactor biosynthesis; NAD(+) biosynthesis; deamido-NAD(+) from nicotinate D-ribonucleotide: step 1/1. Its function is as follows. Catalyzes the reversible adenylation of nicotinate mononucleotide (NaMN) to nicotinic acid adenine dinucleotide (NaAD). This Roseiflexus sp. (strain RS-1) protein is Probable nicotinate-nucleotide adenylyltransferase.